The sequence spans 395 residues: MAESVAARVASLRRFLGSPSGGACVLLLASLAGFVLANSPWAAGYTALTTTPLTLSVLGKRGPDTIDAWVSDGFMTLFFLVVILEIKTEIVTGHLSSPRRVALPLIGALGGMIVPALTYLLVTCGHPEATRGWAIPVATDAAFTLPIILALGRHVSAGARAWLMALAIFDDVLGIVVIAVFYGNALYWPALAAAVVVTAALIGANRIGIRTVWGYATGCILLWIALLGSGLHPTLAGVITGLCLPATALGRNVGQATPLDRAASALTPVVTWVILPLFGFMNVGVSLRGIHPDMMVDAVPLGIMSGLLIGKPVGVFSATLLSTRLRIATLPAETSMGKVFGLSLLCGIGFTISLFIANLSFPDSGLVIPAKMGIFAGSVLSALAGWLWLRFSPEQ.

11 consecutive transmembrane segments (helical) span residues 15 to 35, 66 to 86, 101 to 121, 132 to 152, 161 to 181, 184 to 204, 219 to 239, 265 to 285, 301 to 321, 339 to 359, and 366 to 386; these read FLGS…AGFV, IDAW…ILEI, VALP…TYLL, GWAI…LALG, AWLM…IAVF, NALY…LIGA, CILL…AGVI, ALTP…NVGV, LGIM…ATLL, VFGL…IANL, and LVIP…LAGW.

Belongs to the NhaA Na(+)/H(+) (TC 2.A.33) antiporter family.

Its subcellular location is the cell inner membrane. The catalysed reaction is Na(+)(in) + 2 H(+)(out) = Na(+)(out) + 2 H(+)(in). In terms of biological role, na(+)/H(+) antiporter that extrudes sodium in exchange for external protons. The sequence is that of Na(+)/H(+) antiporter NhaA from Gluconacetobacter diazotrophicus (strain ATCC 49037 / DSM 5601 / CCUG 37298 / CIP 103539 / LMG 7603 / PAl5).